A 33-amino-acid chain; its full sequence is Cytochrome b6-f complex subunit 8 (33 aa).

The chain crosses the membrane as a helical span at residues 2-22 (LFTFAWASLAAIFTFSIAMVV).

This sequence belongs to the PetN family. As to quaternary structure, the 4 large subunits of the cytochrome b6-f complex are cytochrome b6, subunit IV (17 kDa polypeptide, PetD), cytochrome f and the Rieske protein, while the 4 small subunits are PetG, PetL, PetM and PetN. The complex functions as a dimer.

The protein localises to the cellular thylakoid membrane. Component of the cytochrome b6-f complex, which mediates electron transfer between photosystem II (PSII) and photosystem I (PSI), cyclic electron flow around PSI, and state transitions. The protein is Cytochrome b6-f complex subunit 8 of Prochlorococcus marinus (strain MIT 9211).